The primary structure comprises 154 residues: Transcriptional repressor NrdR (154 aa).

A disordered region spans residues 1–22 (MRCPFCGNDDTQVKDSRPTEDN). Residues 3-34 (CPFCGNDDTQVKDSRPTEDNSAIRRRRFCPAC) fold into a zinc finger. A compositionally biased stretch (basic and acidic residues) spans 11–22 (TQVKDSRPTEDN). The ATP-cone domain occupies 49 to 139 (LTVVKSGGSR…VYKDFREVTD (91 aa)).

It belongs to the NrdR family. Requires Zn(2+) as cofactor.

In terms of biological role, negatively regulates transcription of bacterial ribonucleotide reductase nrd genes and operons by binding to NrdR-boxes. This is Transcriptional repressor NrdR from Rhodospirillum centenum (strain ATCC 51521 / SW).